The chain runs to 902 residues: Nitrate reductase [NADPH] (902 aa).

Cys-182 contributes to the Mo-molybdopterin binding site. Residues 537 to 612 (LPLIFADEVA…LKKYCIGRCS (76 aa)) enclose the Cytochrome b5 heme-binding domain. The heme site is built by His-572 and His-595. One can recognise an FAD-binding FR-type domain in the interval 637-751 (RTKVPIVLIS…KGPLGHFTYY (115 aa)). FAD is bound by residues 689–692 (RAYT), 708–712 (LIKVY), Phe-713, 725–727 (LFS), and Thr-778. NADP(+) is bound at residue 872-879 (CMCGPEGM).

The protein belongs to the nitrate reductase family. In terms of assembly, homodimer. It depends on FAD as a cofactor. Heme serves as cofactor. Requires Mo-molybdopterin as cofactor.

The enzyme catalyses nitrite + NADP(+) + H2O = nitrate + NADPH + H(+). Its function is as follows. Nitrate reductase is a key enzyme involved in the first step of nitrate assimilation in plants, fungi and bacteria. The chain is Nitrate reductase [NADPH] (NIAA) from Phytophthora infestans (Potato late blight agent).